Here is a 142-residue protein sequence, read N- to C-terminus: Complexin (142 aa).

2 disordered regions span residues 13–70 (QLSA…MRQD) and 83–105 (IVEAAPQEEPNPLMRKKKTPEEL). Positions 29-138 (GDDKEKAEEE…NELKTQIEGK (110 aa)) form a coiled coil. Basic and acidic residues predominate over residues 31–70 (DKEKAEEEERERQEAIKEAEDRRKEKHRKMEEEREKMRQD). C139 is modified (cysteine methyl ester). The S-farnesyl cysteine moiety is linked to residue C139. A propeptide spans 140-142 (VMQ) (removed in mature form).

The protein belongs to the complexin/synaphin family. As to quaternary structure, binds to the SNARE core complex containing Snap25, synaptobrevin and Syx1A.

Its subcellular location is the membrane. In terms of biological role, positively regulates a late step in synaptic vesicle exocytosis. In Drosophila melanogaster (Fruit fly), this protein is Complexin (cpx).